Here is a 319-residue protein sequence, read N- to C-terminus: Ester hydrolase C11orf54 homolog (319 aa).

The Zn(2+) site is built by His-270, His-272, and His-282.

In terms of assembly, monomer. It depends on Zn(2+) as a cofactor.

The protein localises to the nucleus. The protein resides in the cytoplasm. In terms of biological role, exhibits ester hydrolase activity on the substrate p-nitrophenyl acetate, in vitro. May regulate DNA damage and repair by regulating HIF1A degradation via chaperone-mediated autophagy (CMA). The protein is Ester hydrolase C11orf54 homolog of Danio rerio (Zebrafish).